A 294-amino-acid polypeptide reads, in one-letter code: FAD-dependent monooxygenase SAT1 (294 aa).

Residue Asp108 coordinates FAD.

This sequence belongs to the paxM FAD-dependent monooxygenase family. The cofactor is FAD.

Its pathway is mycotoxin biosynthesis. Its function is as follows. FAD-dependent monooxygenase; part of the satratoxin SC1 cluster involved in the biosynthesis of satratoxins, trichothecene mycotoxins that are associated with human food poisonings. Satratoxins are suggested to be made by products of multiple gene clusters (SC1, SC2 and SC3) that encode 21 proteins in all, including polyketide synthases, acetyltransferases, and other enzymes expected to modify the trichothecene skeleton. SC1 encodes 10 proteins, SAT1 to SAT10. The largest are SAT8, which encodes a putative polyketide synthase (PKS) with a conventional non-reducing architecture, and SAT10, a putative protein containing four ankyrin repeats and thus may be involved in protein scaffolding. The putative short-chain reductase SAT3 may assist the PKS in some capacity. SAT6 contains a secretory lipase domain and acts probably as a trichothecene esterase. SAT5 encodes a putative acetyltransferase, and so, with SAT6, may affect endogenous protection from toxicity. The probable transcription factor SAT9 may regulate the expression of the SC1 cluster. SC2 encodes proteins SAT11 to SAT16, the largest of which encodes the putative reducing PKS SAT13. SAT11 is a cytochrome P450 monooxygenase, while SAT14 and SAT16 are probable acetyltransferases. The SC2 cluster may be regulated by the transcription factor SAT15. SC3 is a small cluster that encodes 5 proteins, SAT17 to SAT21. SAT21 is a putative MFS-type transporter which may have a role in exporting secondary metabolites. The four other proteins putatively encoded in SC3 include the taurine hydroxylase-like protein SAT17, the O-methyltransferase SAT18, the acetyltransferase SAT19, and the Cys6-type zinc finger SAT20, the latter being probably involved in regulation of SC3 expression. This is FAD-dependent monooxygenase SAT1 from Stachybotrys chartarum (strain CBS 109288 / IBT 7711) (Toxic black mold).